The following is a 24-amino-acid chain: Prokineticin 1-like protein (24 aa).

An intrachain disulfide couples Cys-7 to Cys-19.

In terms of tissue distribution, expressed by the skin glands.

Its subcellular location is the secreted. Functionally, stimulates insulin secretion by BRIN-BD11 cells in vitro. This chain is Prokineticin 1-like protein, found in Pelophylax saharicus (Sahara frog).